Reading from the N-terminus, the 419-residue chain is MAALAGLGVLGAGRHLWKLPVRLSAGLQGCGPRRGYIAGSAERSPTFGLLFDIDGVLVRGHRVIPAALEAFSKLVNSQGQLRVPVVFVTNAGNILQHNKAQELSDLLRCKVDPDQVILSHSPMKLFLQYHSKQMLVSGQGPLVENARALGFQNVVTIDELRLAFPELDMVDLQRRPKTMRLRSDFPAIEGVLLLGEPVRWETNLQLIMDVLLSNGHPGTGLATAPYPHLPVLASNMDLLWMAEAKMPRFGHGTFLLCLETIYRKITGNELKYEGLMGKPSILTYQYAEDVIRQQAERRGWAAPIRKLYAIGDNPMSDVYGANLFHQYLQMANRGEEEQQTGGQQKQRPSATQSCASILVCTGIYSSQDPGSQVPPPGRRELPFHGHRDFSFSPGLLEASHIVHDVNEAVQLVFHQEGWA.

The signal sequence occupies residues 1-15; that stretch reads MAALAGLGVLGAGRH.

This sequence belongs to the HAD-like hydrolase superfamily.

The protein is Haloacid dehalogenase-like hydrolase domain-containing 5 of Mus musculus (Mouse).